The following is a 356-amino-acid chain: Dihydroorotate dehydrogenase (quinone) (356 aa).

Residues 67 to 71 and Thr-91 contribute to the FMN site; that span reads PGFDK. Lys-71 lines the substrate pocket. 116-120 is a substrate binding site; that stretch reads NRMGF. The FMN site is built by Asn-147 and Asn-178. Asn-178 provides a ligand contact to substrate. Ser-181 (nucleophile) is an active-site residue. Asn-183 serves as a coordination point for substrate. The FMN site is built by Lys-218 and Ser-246. 247 to 248 contributes to the substrate binding site; that stretch reads NT. FMN contacts are provided by residues Gly-268, Gly-297, and 318 to 319; that span reads YS.

This sequence belongs to the dihydroorotate dehydrogenase family. Type 2 subfamily. In terms of assembly, monomer. Requires FMN as cofactor.

It localises to the cell membrane. The catalysed reaction is (S)-dihydroorotate + a quinone = orotate + a quinol. Its pathway is pyrimidine metabolism; UMP biosynthesis via de novo pathway; orotate from (S)-dihydroorotate (quinone route): step 1/1. In terms of biological role, catalyzes the conversion of dihydroorotate to orotate with quinone as electron acceptor. The polypeptide is Dihydroorotate dehydrogenase (quinone) (Sphingopyxis alaskensis (strain DSM 13593 / LMG 18877 / RB2256) (Sphingomonas alaskensis)).